Reading from the N-terminus, the 197-residue chain is Scoloptoxin SSD20 (197 aa).

Residues 1-6 form the signal peptide; it reads PPMTTE.

As to expression, expressed by the venom gland.

It localises to the secreted. Its function is as follows. May act as a voltage-gated potassium channel inhibitor. Is highly similar to the subunit beta of SSD14 which, when complexed with subunit alpha, induces platelet aggregation and hemolysis. This is Scoloptoxin SSD20 from Scolopendra dehaani (Thai centipede).